We begin with the raw amino-acid sequence, 222 residues long: Exosome complex component Rrp4 (222 aa).

The S1 motif domain occupies 63–131 (NDSVIGKVVD…EVKKVKLGLH (69 aa)). The KH domain maps to 139-200 (EGGTLAYITP…EIVKRALEMI (62 aa)).

The protein belongs to the RRP4 family. Component of the archaeal exosome complex. Forms a trimer of Rrp4 and/or Csl4 subunits. The trimer associates with a hexameric ring-like arrangement composed of 3 Rrp41-Rrp42 heterodimers.

Its subcellular location is the cytoplasm. In terms of biological role, non-catalytic component of the exosome, which is a complex involved in RNA degradation. Increases the RNA binding and the efficiency of RNA degradation. Confers strong poly(A) specificity to the exosome. The chain is Exosome complex component Rrp4 from Methanothermus fervidus (strain ATCC 43054 / DSM 2088 / JCM 10308 / V24 S).